Here is a 575-residue protein sequence, read N- to C-terminus: Eukaryotic translation initiation factor 3 subunit D (575 aa).

Disordered stretches follow at residues P36 to R66 and S103 to V177. Residues K39 to G59 show a composition bias toward basic and acidic residues. Positions F109 to G144 are enriched in gly residues. Positions G163–D174 are enriched in basic and acidic residues. Residues N302–P316 form an RNA gate region.

It belongs to the eIF-3 subunit D family. In terms of assembly, component of the eukaryotic translation initiation factor 3 (eIF-3) complex.

It is found in the cytoplasm. Its function is as follows. mRNA cap-binding component of the eukaryotic translation initiation factor 3 (eIF-3) complex, which is involved in protein synthesis of a specialized repertoire of mRNAs and, together with other initiation factors, stimulates binding of mRNA and methionyl-tRNAi to the 40S ribosome. The eIF-3 complex specifically targets and initiates translation of a subset of mRNAs involved in cell proliferation. In the eIF-3 complex, eif3d specifically recognizes and binds the 7-methylguanosine cap of a subset of mRNAs. The protein is Eukaryotic translation initiation factor 3 subunit D of Phaeosphaeria nodorum (strain SN15 / ATCC MYA-4574 / FGSC 10173) (Glume blotch fungus).